The sequence spans 449 residues: tRNA-2-methylthio-N(6)-dimethylallyladenosine synthase (449 aa).

Positions 4-119 (RTFHIETFGC…APQALDRLVE (116 aa)) constitute an MTTase N-terminal domain. [4Fe-4S] cluster contacts are provided by Cys13, Cys48, Cys82, Cys158, Cys162, and Cys165. The Radical SAM core domain occupies 144–375 (GAVPASVFVN…QTLQNRLTER (232 aa)). A TRAM domain is found at 378-446 (QDMVGKKVEV…KHSLLAEQAG (69 aa)).

It belongs to the methylthiotransferase family. MiaB subfamily. In terms of assembly, monomer. Requires [4Fe-4S] cluster as cofactor.

It is found in the cytoplasm. It catalyses the reaction N(6)-dimethylallyladenosine(37) in tRNA + (sulfur carrier)-SH + AH2 + 2 S-adenosyl-L-methionine = 2-methylsulfanyl-N(6)-dimethylallyladenosine(37) in tRNA + (sulfur carrier)-H + 5'-deoxyadenosine + L-methionine + A + S-adenosyl-L-homocysteine + 2 H(+). Its function is as follows. Catalyzes the methylthiolation of N6-(dimethylallyl)adenosine (i(6)A), leading to the formation of 2-methylthio-N6-(dimethylallyl)adenosine (ms(2)i(6)A) at position 37 in tRNAs that read codons beginning with uridine. The protein is tRNA-2-methylthio-N(6)-dimethylallyladenosine synthase of Nitratidesulfovibrio vulgaris (strain DP4) (Desulfovibrio vulgaris).